Consider the following 223-residue polypeptide: Type II restriction enzyme BglII (223 aa).

Residues Asp-84 and Val-94 each coordinate Mg(2+).

In terms of assembly, homodimer. It depends on Mg(2+) as a cofactor.

The enzyme catalyses Endonucleolytic cleavage of DNA to give specific double-stranded fragments with terminal 5'-phosphates.. A P subtype restriction enzyme that recognizes the double-stranded sequence 5'-AGATCT-3' and cleaves after A-1. This Bacillus subtilis protein is Type II restriction enzyme BglII (bglIIR).